The primary structure comprises 418 residues: MSFSPVAPSISAPTPRRSRWDSIGNAVAWPLAMLLMAHRFFVLAINGAVTDDFTTVYSALRRFVEGIPVYNEVYHFVDPHYLYNPGATLLLAPLGYITHFTLARWMFIAVNLLAIVLAFGLLTRLSGWALRSMVWPIAIALAMLTETVQNTLIFSNINGILLLMLAIFLWCVVHKKSWLGGLVIGLAILIKPMFLPLLFLPLVKKQWGSLILGILTPVIFNAVAWFLVPGASEYVTRTMPYLGETRDFANSSLPGLAIYFGMPTWMEITWFLIFGAMVGLAVLALLRFRNTEPYFWAATTTGVLLTGVFFLSSLGQMYYSMMIFPMIFTLLGSRSVFHNWVAWVAAYFFLSPDTFTSQRLPDVARWMEFFSATVGWGLLIVVTFVSALIWFIGDIRAKGTPSSPITTDPTHDHLERTA.

A run of 11 helical transmembrane segments spans residues 25 to 45 (NAVAWPLAMLLMAHRFFVLAI), 81 to 101 (YLYNPGATLLLAPLGYITHFT), 102 to 122 (LARWMFIAVNLLAIVLAFGLL), 125 to 145 (LSGWALRSMVWPIAIALAMLT), 153 to 173 (IFSNINGILLLMLAIFLWCVV), 183 to 203 (VIGLAILIKPMFLPLLFLPLV), 210 to 230 (LILGILTPVIFNAVAWFLVPG), 266 to 286 (MEITWFLIFGAMVGLAVLALL), 293 to 312 (PYFWAATTTGVLLTGVFFLS), 327 to 349 (IFTLLGSRSVFHNWVAWVAAYFF), and 372 to 392 (ATVGWGLLIVVTFVSALIWFI).

This sequence belongs to the glycosyltransferase 87 family.

Its subcellular location is the cell membrane. It catalyses the reaction Adds an alpha-D-arabinofuranosyl group from trans,octacis-decaprenylphospho-beta-D-arabinofuranose at the 3-O-position of an alpha-(1-&gt;5)-arabinofuranan chain attached to a beta-(1-&gt;5)-galactofuranan chain.. It participates in cell wall biogenesis; cell wall polysaccharide biosynthesis. Involved in the biosynthesis of the arabinogalactan (AG) region of the mycolylarabinogalactan-peptidoglycan (mAGP) complex, an essential component of the corynebacterial cell wall. Catalyzes the addition of an arabinofuranosyl (Araf) residue from the sugar donor beta-D-arabinofuranosyl-1-monophosphoryldecaprenol (DPA) on the C-3 of an alpha-(1-&gt;5)-linked Araf from the arabinan backbone of AG. The sequence is that of Alpha-(1-&gt;3)-arabinofuranosyltransferase from Corynebacterium glutamicum (strain ATCC 13032 / DSM 20300 / JCM 1318 / BCRC 11384 / CCUG 27702 / LMG 3730 / NBRC 12168 / NCIMB 10025 / NRRL B-2784 / 534).